Here is a 104-residue protein sequence, read N- to C-terminus: Large ribosomal subunit protein bL21 (104 aa).

Belongs to the bacterial ribosomal protein bL21 family. As to quaternary structure, part of the 50S ribosomal subunit. Contacts protein L20.

Functionally, this protein binds to 23S rRNA in the presence of protein L20. The protein is Large ribosomal subunit protein bL21 of Caldanaerobacter subterraneus subsp. tengcongensis (strain DSM 15242 / JCM 11007 / NBRC 100824 / MB4) (Thermoanaerobacter tengcongensis).